The primary structure comprises 272 residues: Shikimate dehydrogenase (NADP(+)) (272 aa).

Residues 14–16 (SKS) and Thr61 contribute to the shikimate site. The active-site Proton acceptor is Lys65. Glu77 is an NADP(+) binding site. The shikimate site is built by Asn86 and Asp102. Residues 126-130 (GAGGA), 149-154 (NRTVSR), and Met213 contribute to the NADP(+) site. Tyr215 contacts shikimate. Residue Gly237 participates in NADP(+) binding.

It belongs to the shikimate dehydrogenase family. Homodimer.

It carries out the reaction shikimate + NADP(+) = 3-dehydroshikimate + NADPH + H(+). Its pathway is metabolic intermediate biosynthesis; chorismate biosynthesis; chorismate from D-erythrose 4-phosphate and phosphoenolpyruvate: step 4/7. Its function is as follows. Involved in the biosynthesis of the chorismate, which leads to the biosynthesis of aromatic amino acids. Catalyzes the reversible NADPH linked reduction of 3-dehydroshikimate (DHSA) to yield shikimate (SA). This is Shikimate dehydrogenase (NADP(+)) from Escherichia coli O45:K1 (strain S88 / ExPEC).